Reading from the N-terminus, the 175-residue chain is Bifunctional protein PyrR (175 aa).

The short motif at 97–109 (IVLIDDVLFTGRT) is the PRPP-binding element.

Belongs to the purine/pyrimidine phosphoribosyltransferase family. PyrR subfamily. Homodimer and homohexamer; in equilibrium.

It carries out the reaction UMP + diphosphate = 5-phospho-alpha-D-ribose 1-diphosphate + uracil. In terms of biological role, regulates transcriptional attenuation of the pyrimidine nucleotide (pyr) operon by binding in a uridine-dependent manner to specific sites on pyr mRNA. This disrupts an antiterminator hairpin in the RNA and favors formation of a downstream transcription terminator, leading to a reduced expression of downstream genes. Its function is as follows. Also displays a weak uracil phosphoribosyltransferase activity which is not physiologically significant. The chain is Bifunctional protein PyrR from Leuconostoc citreum (strain KM20).